The chain runs to 646 residues: Zinc finger protein 493 (646 aa).

The C2H2-type 1; degenerate zinc-finger motif lies at 26–48; the sequence is FQCDKYVKVFHKLLNSNRHNTKH. C2H2-type zinc fingers lie at residues 54–76 and 82–104; these read FKCKKCGKSFCMLLHLCQHKRIH and YRCEECGKAFIWFSTLTRHRRVH. A C2H2-type 4; degenerate zinc finger spans residues 109 to 131; sequence SYKYECGKSFNQDSNLTTHKRIH. The C2H2-type 5 zinc finger occupies 137-159; sequence YKCEECGTSFYQFSYLTRHKLIH. The segment at 165–187 adopts a C2H2-type 6; degenerate zinc-finger fold; that stretch reads YKCEQYGKTFNQSSTLTGHKIIH. The C2H2-type 7; degenerate zinc-finger motif lies at 193-215; that stretch reads YKCEECGKAFSIFSTPTKHKIIH. The C2H2-type 8; degenerate zinc finger occupies 221 to 243; it reads HRCEEYCKAYKESSHLTTHKRIH. 14 consecutive C2H2-type zinc fingers follow at residues 249-271, 277-299, 305-327, 333-355, 361-383, 389-411, 417-439, 445-467, 473-495, 501-523, 529-551, 557-579, 585-607, and 613-635; these read YKCEECGKAFSIFSTLTKHKIIH, HRCEECGKAYKESSHLTTHKRIH, YKCEECGKTFSVFSILTKHKIIH, YKCEECGKAFKRSSTLTKHRIIH, YKCEECGKAFNQSSTLSIHKIIH, YKCEECGKAFKRSSTLTIHKMIH, YKCEECGKAFNRSSHLTTHKRIH, YKCKECGKSFSVFSTLTKHKIIH, YKCEECGKAFNRSSILSIHKKIH, YKCEECGKAFKRSSHLAGHKQIH, YKCEKCGKTFYRFSNLNTHKIIH, CKCEECGKAFNHSSNLIKHKLIH, and YKCEACGKAFRRSSHLSRHKIIH.

The protein resides in the nucleus. In terms of biological role, may be involved in transcriptional regulation. This is Zinc finger protein 493 (ZNF493) from Homo sapiens (Human).